The primary structure comprises 441 residues: 23S rRNA (uracil(1939)-C(5))-methyltransferase RlmD (441 aa).

Residues 10-68 form the TRAM domain; the sequence is KPLKQQSLVLDITAMDHHGRGIAKHNNKVCFVSNALPNEQVKATIIADKARYSEAQTHK. 4 residues coordinate [4Fe-4S] cluster: Cys81, Cys87, Cys90, and Cys169. Residues Gln274, Phe303, Asn308, Glu324, Asp351, and Asp372 each contribute to the S-adenosyl-L-methionine site. The Nucleophile role is filled by Cys398.

Belongs to the class I-like SAM-binding methyltransferase superfamily. RNA M5U methyltransferase family. RlmD subfamily.

The catalysed reaction is uridine(1939) in 23S rRNA + S-adenosyl-L-methionine = 5-methyluridine(1939) in 23S rRNA + S-adenosyl-L-homocysteine + H(+). In terms of biological role, catalyzes the formation of 5-methyl-uridine at position 1939 (m5U1939) in 23S rRNA. This chain is 23S rRNA (uracil(1939)-C(5))-methyltransferase RlmD, found in Pseudoalteromonas translucida (strain TAC 125).